Here is a 250-residue protein sequence, read N- to C-terminus: Proteasome subunit alpha type-4-A (250 aa).

Glycyl lysine isopeptide (Lys-Gly) (interchain with G-Cter in ubiquitin) cross-links involve residues K40 and K64.

Belongs to the peptidase T1A family. Component of the 20S core complex of the 26S proteasome. The 26S proteasome is composed of a core protease (CP), known as the 20S proteasome, capped at one or both ends by the 19S regulatory particle (RP/PA700). The 20S proteasome core is composed of 28 subunits that are arranged in four stacked rings, resulting in a barrel-shaped structure. The two end rings are each formed by seven alpha subunits, and the two central rings are each formed by seven beta subunits. The catalytic chamber with the active sites is on the inside of the barrel. In terms of tissue distribution, ubiquitous low levels, higher expression in siliques and flowers.

Its subcellular location is the cytoplasm. The protein localises to the nucleus. Functionally, the proteasome is a multicatalytic proteinase complex which is characterized by its ability to cleave peptides with Arg, Phe, Tyr, Leu, and Glu adjacent to the leaving group at neutral or slightly basic pH. The proteasome has an ATP-dependent proteolytic activity. This is Proteasome subunit alpha type-4-A (PAC1) from Arabidopsis thaliana (Mouse-ear cress).